The following is a 234-amino-acid chain: 2,3-bisphosphoglycerate-dependent phosphoglycerate mutase (234 aa).

Substrate is bound by residues 10-17, 23-24, R62, 89-92, K100, 116-117, and 186-187; these read RHGSSIWN, TG, ERHY, RR, and GN. The active-site Tele-phosphohistidine intermediate is H11. E89 functions as the Proton donor/acceptor in the catalytic mechanism.

Belongs to the phosphoglycerate mutase family. BPG-dependent PGAM subfamily. In terms of assembly, homodimer.

It catalyses the reaction (2R)-2-phosphoglycerate = (2R)-3-phosphoglycerate. The protein operates within carbohydrate degradation; glycolysis; pyruvate from D-glyceraldehyde 3-phosphate: step 3/5. Functionally, catalyzes the interconversion of 2-phosphoglycerate and 3-phosphoglycerate. The polypeptide is 2,3-bisphosphoglycerate-dependent phosphoglycerate mutase (Wigglesworthia glossinidia brevipalpis).